A 145-amino-acid polypeptide reads, in one-letter code: 3-hydroxyacyl-[acyl-carrier-protein] dehydratase FabZ (145 aa).

Residue H48 is part of the active site.

It belongs to the thioester dehydratase family. FabZ subfamily.

The protein resides in the cytoplasm. It carries out the reaction a (3R)-hydroxyacyl-[ACP] = a (2E)-enoyl-[ACP] + H2O. Its function is as follows. Involved in unsaturated fatty acids biosynthesis. Catalyzes the dehydration of short chain beta-hydroxyacyl-ACPs and long chain saturated and unsaturated beta-hydroxyacyl-ACPs. This Marinomonas sp. (strain MWYL1) protein is 3-hydroxyacyl-[acyl-carrier-protein] dehydratase FabZ.